Here is a 340-residue protein sequence, read N- to C-terminus: Glycerol-3-phosphate dehydrogenase [NAD(P)+] (340 aa).

The NADPH site is built by serine 12, tryptophan 13, lysine 34, and lysine 107. Residues lysine 107, glycine 138, and serine 140 each contribute to the sn-glycerol 3-phosphate site. Residue alanine 142 participates in NADPH binding. Sn-glycerol 3-phosphate-binding residues include lysine 193, aspartate 246, serine 256, arginine 257, and asparagine 258. The Proton acceptor role is filled by lysine 193. Arginine 257 contacts NADPH. The NADPH site is built by isoleucine 281 and glutamate 283.

Belongs to the NAD-dependent glycerol-3-phosphate dehydrogenase family.

The protein localises to the cytoplasm. The catalysed reaction is sn-glycerol 3-phosphate + NAD(+) = dihydroxyacetone phosphate + NADH + H(+). It catalyses the reaction sn-glycerol 3-phosphate + NADP(+) = dihydroxyacetone phosphate + NADPH + H(+). Its pathway is membrane lipid metabolism; glycerophospholipid metabolism. Its function is as follows. Catalyzes the reduction of the glycolytic intermediate dihydroxyacetone phosphate (DHAP) to sn-glycerol 3-phosphate (G3P), the key precursor for phospholipid synthesis. The protein is Glycerol-3-phosphate dehydrogenase [NAD(P)+] of Enterococcus faecalis (strain ATCC 700802 / V583).